The sequence spans 179 residues: Beta-defensin 22 (179 aa).

The N-terminal stretch at 1-20 is a signal peptide; the sequence is MKSLLSTLVIIMFLAHLVTG. 3 cysteine pairs are disulfide-bonded: Cys27-Cys58, Cys34-Cys52, and Cys38-Cys59. Residues 105–150 are compositionally biased toward low complexity; the sequence is GTPTKTSAPAKTSAPAKTSTTTKASNAAKASTTTKASNAAKASAAT. The segment at 105-152 is disordered; sequence GTPTKTSAPAKTSAPAKTSTTTKASNAAKASTTTKASNAAKASAATMA.

The protein belongs to the beta-defensin family. In terms of processing, O-glycosylated; glycans contain alpha(2,3)-linked sialic acids. As to expression, specifically expressed in corpus epididymis and cauda epididymis with expression in corpus being highest (at protein level). Not detected in other tissues tested, including testis, prostate, seminal vesicle and vas deferens (at protein level).

The protein resides in the cytoplasmic vesicle. It is found in the secretory vesicle. It localises to the acrosome. The protein localises to the secreted. Its subcellular location is the extracellular space. Its function is as follows. Probable component of sperm glycocalyx. Likely protects and facilitates transport of sperm in the female reproductive tract. Probably released from the sperm surface during capacitation. This is Beta-defensin 22 from Mus musculus (Mouse).